Reading from the N-terminus, the 631-residue chain is Phosphomethylpyrimidine synthase (631 aa).

Substrate is bound by residues asparagine 239, methionine 268, tyrosine 297, histidine 333, 353-355 (SRG), 394-397 (DGLR), and glutamate 433. A Zn(2+)-binding site is contributed by histidine 437. Tyrosine 460 is a binding site for substrate. A Zn(2+)-binding site is contributed by histidine 501. Residues cysteine 581, cysteine 584, and cysteine 589 each coordinate [4Fe-4S] cluster.

It belongs to the ThiC family. Homodimer. It depends on [4Fe-4S] cluster as a cofactor.

The enzyme catalyses 5-amino-1-(5-phospho-beta-D-ribosyl)imidazole + S-adenosyl-L-methionine = 4-amino-2-methyl-5-(phosphooxymethyl)pyrimidine + CO + 5'-deoxyadenosine + formate + L-methionine + 3 H(+). The protein operates within cofactor biosynthesis; thiamine diphosphate biosynthesis. Functionally, catalyzes the synthesis of the hydroxymethylpyrimidine phosphate (HMP-P) moiety of thiamine from aminoimidazole ribotide (AIR) in a radical S-adenosyl-L-methionine (SAM)-dependent reaction. The protein is Phosphomethylpyrimidine synthase of Salmonella paratyphi C (strain RKS4594).